A 175-amino-acid polypeptide reads, in one-letter code: Lithostathine (175 aa).

The first 26 residues, 1–26 (MLPSLGLPRLSWMLLSCLMLLSQIQG), serve as a signal peptide directing secretion. The propeptide occupies 27-37 (ENSQKELPSAR). The region spanning 38-173 (ISCPSGSMAY…NLNLPYVCKF (136 aa)) is the C-type lectin domain. Disulfide bonds link cysteine 40-cysteine 51, cysteine 68-cysteine 171, and cysteine 146-cysteine 163.

In terms of assembly, cleaved to give an A chain and a B chain joined by a disulfide bond. In terms of tissue distribution, in pancreatic acinar cells.

Its subcellular location is the secreted. Might act as an inhibitor of spontaneous calcium carbonate precipitation. This Bos taurus (Bovine) protein is Lithostathine (PTP).